A 108-amino-acid polypeptide reads, in one-letter code: X antigen family member 5 (108 aa).

The segment at 20-108 (VGPMLEPSVP…PEGGEGKPQL (89 aa)) is disordered. Basic and acidic residues-rich tracts occupy residues 40 to 52 (SQDHTPGQKREDD) and 94 to 108 (EQFKMPEGGEGKPQL).

It belongs to the GAGE family.

The chain is X antigen family member 5 (XAGE5) from Homo sapiens (Human).